Consider the following 160-residue polypeptide: UPF0178 protein PA5247 (160 aa).

Belongs to the UPF0178 family.

The sequence is that of UPF0178 protein PA5247 from Pseudomonas aeruginosa (strain ATCC 15692 / DSM 22644 / CIP 104116 / JCM 14847 / LMG 12228 / 1C / PRS 101 / PAO1).